The chain runs to 150 residues: Large ribosomal subunit protein bL9 (150 aa).

Belongs to the bacterial ribosomal protein bL9 family.

In terms of biological role, binds to the 23S rRNA. This chain is Large ribosomal subunit protein bL9, found in Streptococcus pyogenes serotype M6 (strain ATCC BAA-946 / MGAS10394).